The chain runs to 310 residues: tRNA dimethylallyltransferase (310 aa).

9–16 is a binding site for ATP; the sequence is GPTAVGKT. A substrate-binding site is contributed by 11–16; the sequence is TAVGKT. The interval 34–37 is interaction with substrate tRNA; it reads DSMQ.

Belongs to the IPP transferase family. As to quaternary structure, monomer. It depends on Mg(2+) as a cofactor.

It catalyses the reaction adenosine(37) in tRNA + dimethylallyl diphosphate = N(6)-dimethylallyladenosine(37) in tRNA + diphosphate. Functionally, catalyzes the transfer of a dimethylallyl group onto the adenine at position 37 in tRNAs that read codons beginning with uridine, leading to the formation of N6-(dimethylallyl)adenosine (i(6)A). The sequence is that of tRNA dimethylallyltransferase from Pediococcus pentosaceus (strain ATCC 25745 / CCUG 21536 / LMG 10740 / 183-1w).